Here is a 632-residue protein sequence, read N- to C-terminus: Phosphomethylpyrimidine synthase (632 aa).

Substrate is bound by residues Asn-237, Met-266, Tyr-295, His-331, 351 to 353, 392 to 395, and Glu-431; these read SRG and DGLR. Residue His-435 participates in Zn(2+) binding. Residue Tyr-458 participates in substrate binding. His-499 lines the Zn(2+) pocket. Cys-579, Cys-582, and Cys-587 together coordinate [4Fe-4S] cluster.

It belongs to the ThiC family. As to quaternary structure, homodimer. It depends on [4Fe-4S] cluster as a cofactor.

The enzyme catalyses 5-amino-1-(5-phospho-beta-D-ribosyl)imidazole + S-adenosyl-L-methionine = 4-amino-2-methyl-5-(phosphooxymethyl)pyrimidine + CO + 5'-deoxyadenosine + formate + L-methionine + 3 H(+). It participates in cofactor biosynthesis; thiamine diphosphate biosynthesis. Functionally, catalyzes the synthesis of the hydroxymethylpyrimidine phosphate (HMP-P) moiety of thiamine from aminoimidazole ribotide (AIR) in a radical S-adenosyl-L-methionine (SAM)-dependent reaction. The sequence is that of Phosphomethylpyrimidine synthase from Chromobacterium violaceum (strain ATCC 12472 / DSM 30191 / JCM 1249 / CCUG 213 / NBRC 12614 / NCIMB 9131 / NCTC 9757 / MK).